A 198-amino-acid chain; its full sequence is Glycerol-3-phosphate acyltransferase (198 aa).

Transmembrane regions (helical) follow at residues 2-22 (IIVI…TGYL), 55-75 (MITQ…CMLI), 88-108 (YLSI…FLGF), 118-138 (VGAF…VYFV), and 162-182 (IALR…GLLI).

This sequence belongs to the PlsY family. As to quaternary structure, probably interacts with PlsX.

It is found in the cell membrane. It catalyses the reaction an acyl phosphate + sn-glycerol 3-phosphate = a 1-acyl-sn-glycero-3-phosphate + phosphate. Its pathway is lipid metabolism; phospholipid metabolism. Catalyzes the transfer of an acyl group from acyl-phosphate (acyl-PO(4)) to glycerol-3-phosphate (G3P) to form lysophosphatidic acid (LPA). This enzyme utilizes acyl-phosphate as fatty acyl donor, but not acyl-CoA or acyl-ACP. In Clostridium acetobutylicum (strain ATCC 824 / DSM 792 / JCM 1419 / IAM 19013 / LMG 5710 / NBRC 13948 / NRRL B-527 / VKM B-1787 / 2291 / W), this protein is Glycerol-3-phosphate acyltransferase.